The sequence spans 395 residues: tRNA-specific 2-thiouridylase MnmA (395 aa).

ATP-binding positions include 6 to 13 and L32; that span reads AMSGGVDS. Residue C101 is the Nucleophile of the active site. C101 and C193 form a disulfide bridge. G125 serves as a coordination point for ATP. The tract at residues 143–145 is interaction with tRNA; it reads KDQ. C193 serves as the catalytic Cysteine persulfide intermediate.

Belongs to the MnmA/TRMU family.

It is found in the cytoplasm. The catalysed reaction is S-sulfanyl-L-cysteinyl-[protein] + uridine(34) in tRNA + AH2 + ATP = 2-thiouridine(34) in tRNA + L-cysteinyl-[protein] + A + AMP + diphosphate + H(+). In terms of biological role, catalyzes the 2-thiolation of uridine at the wobble position (U34) of tRNA, leading to the formation of s(2)U34. This Corynebacterium jeikeium (strain K411) protein is tRNA-specific 2-thiouridylase MnmA.